Reading from the N-terminus, the 856-residue chain is Centrosomal protein of 97 kDa (856 aa).

LRR repeat units lie at residues 37-58 (DVHTLILDKNQIIKLENLEKCK), 59-80 (QLIQLSVANNRLVRMMGVAKLT), 81-102 (QLRVLNLPHNSIGCVEGLKDLV), 103-124 (HLEWLNLAGNNLKTMEQVNSCT), 125-146 (ALQHLDLSDNNIPQIGDVSKLI), 147-168 (SLKTLLLHGNIITSLRMAPAYL), 171-192 (NLSILSLAENEIRDLNEISFLA), and 196-205 (ELEQLSIMNN). The region spanning 211–249 (TPSIPGFDYRPFIVSWCLNLRVLDGYVISQKESLKAEWL) is the LRRCT domain. The CCP110-binding stretch occupies residues 300–742 (HQRQLMSQSQ…KCVKDRDSEA (443 aa)). S308 and S410 each carry phosphoserine. A disordered region spans residues 430-451 (DDGADEFTKGLENQDEDKDKEK). Residue S497 is modified to Phosphoserine. Positions 498–513 (LTSLPESAGHSASRTE) are enriched in polar residues. Residues 498 to 525 (LTSLPESAGHSASRTEANSEEAMSPATS) are disordered. Residue S521 is modified to Phosphoserine. T534 is subject to Phosphothreonine. One can recognise an IQ domain in the interval 550-579 (LNAAATKLQACWRGFYTRNYNQQAKGVRYE). An interaction with MPHOSPH9 region spans residues 579–853 (EIRLRRMQEH…FQGLHVGVTV (275 aa)). Disordered regions lie at residues 646–672 (PPISSTLASPKPPLFPHHQDPSSDQSS) and 737–840 (DRDS…PPEC). A compositionally biased stretch (basic and acidic residues) spans 737–752 (DRDSEATAEEHSDCSR). Positions 753 to 773 (ESSASEQDNTLLQQYLTSVQQ) are enriched in polar residues. At S755 the chain carries Phosphoserine. Acidic residues predominate over residues 776–787 (DAAEAADSDDVA). Over residues 799-811 (ERFDASSDSETHR) the composition is skewed to basic and acidic residues. The span at 812-833 (VASTSQDEISQTPENCQLNEEA) shows a compositional bias: polar residues.

In terms of assembly, interacts with CALM1, CEP76, KIF24 and TALPID3. Interacts with CCP110. ENKD1 competes with CEP97 for binding to CCP110, destabilizing the interaction between CP110 and CEP97 which promotes the removal of CCP110 and CEP97 from the mother centriole and allows the initiation of ciliogenesis. Via its interaction with CCP110, may indirectly interact with HERC2 and NEURL4. Interacts with MPHOSPH9.

The protein resides in the cytoplasm. It localises to the cytoskeleton. Its subcellular location is the microtubule organizing center. The protein localises to the centrosome. It is found in the centriole. In terms of biological role, acts as a key negative regulator of ciliogenesis in collaboration with CCP110 by capping the mother centriole thereby preventing cilia formation. Required for recruitment of CCP110 to the centrosome. This Mus musculus (Mouse) protein is Centrosomal protein of 97 kDa (Cep97).